The following is a 141-amino-acid chain: Nucleoside triphosphatase NudI (141 aa).

Residues Met1–Leu141 enclose the Nudix hydrolase domain. Positions Gly38 to Gly59 match the Nudix box motif.

This sequence belongs to the Nudix hydrolase family. NudI subfamily. Monomer. Mg(2+) serves as cofactor.

The enzyme catalyses a ribonucleoside 5'-triphosphate + H2O = a ribonucleoside 5'-phosphate + diphosphate + H(+). The catalysed reaction is a 2'-deoxyribonucleoside 5'-triphosphate + H2O = a 2'-deoxyribonucleoside 5'-phosphate + diphosphate + H(+). It catalyses the reaction dUTP + H2O = dUMP + diphosphate + H(+). It carries out the reaction dTTP + H2O = dTMP + diphosphate + H(+). The enzyme catalyses dCTP + H2O = dCMP + diphosphate + H(+). Catalyzes the hydrolysis of nucleoside triphosphates, with a preference for pyrimidine deoxynucleoside triphosphates (dUTP, dTTP and dCTP). The polypeptide is Nucleoside triphosphatase NudI (Salmonella agona (strain SL483)).